The chain runs to 494 residues: MSNYFNTLNLREQLDQLGRCRFMDREEFATEADYLKGKKVVIVGCGAQGLNQGLNMRDSGLDVAYALRQAAIDEQRQSYKNAKENGFEVASYETLIPQADLVINLTPDKQHTNVVETVMPLMKEGAALGYSHGFNVVEEGMQIRKDLTVVMVAPKCPGTEVREEYKRGFGVPTLIAVHPENDPKGEGWDIAKAWAAGTGGHRAGCLESSFVAEVKSDLMGEQTILCGMLQAGSIVSYEKMIADGIEPGYAGKLLQYGWETITEALKFGGVTHMMDRLSNPAKVKAFELSEELKELMRPLYNKHMDDIISGEFSRTMMADWANDDVNLFGWREETGQTAFENYPESDVEISEQEYFDNGILLVAMVRAGVELAFEAMTASGIIDESAYYESLHELPLIANTVARKRLYEMNVVISDTAEYGNYLFANVATPLLREKFMPSVETDVIGRGLGEASNQVDNATLIAVNDAIRNHPVEYIGEELRSYMSDMKRIAVGG.

The KARI N-terminal Rossmann domain occupies 14-208 (LDQLGRCRFM…GGHRAGCLES (195 aa)). Residues 45-48 (CGAQ), R68, R76, S78, and 108-110 (DKQ) each bind NADP(+). Residue H132 is part of the active site. G158 is a binding site for NADP(+). KARI C-terminal knotted domains are found at residues 209 to 344 (SFVA…NYPE) and 345 to 487 (SDVE…MSDM). Mg(2+)-binding residues include D217, E221, E389, and E393. Substrate is bound at residue S414.

This sequence belongs to the ketol-acid reductoisomerase family. It depends on Mg(2+) as a cofactor.

It carries out the reaction (2R)-2,3-dihydroxy-3-methylbutanoate + NADP(+) = (2S)-2-acetolactate + NADPH + H(+). The catalysed reaction is (2R,3R)-2,3-dihydroxy-3-methylpentanoate + NADP(+) = (S)-2-ethyl-2-hydroxy-3-oxobutanoate + NADPH + H(+). The protein operates within amino-acid biosynthesis; L-isoleucine biosynthesis; L-isoleucine from 2-oxobutanoate: step 2/4. Its pathway is amino-acid biosynthesis; L-valine biosynthesis; L-valine from pyruvate: step 2/4. In terms of biological role, involved in the biosynthesis of branched-chain amino acids (BCAA). Catalyzes an alkyl-migration followed by a ketol-acid reduction of (S)-2-acetolactate (S2AL) to yield (R)-2,3-dihydroxy-isovalerate. In the isomerase reaction, S2AL is rearranged via a Mg-dependent methyl migration to produce 3-hydroxy-3-methyl-2-ketobutyrate (HMKB). In the reductase reaction, this 2-ketoacid undergoes a metal-dependent reduction by NADPH to yield (R)-2,3-dihydroxy-isovalerate. This chain is Ketol-acid reductoisomerase (NADP(+)), found in Aliivibrio fischeri (strain ATCC 700601 / ES114) (Vibrio fischeri).